The primary structure comprises 314 residues: Ferrochelatase (314 aa).

The Fe cation site is built by histidine 184 and glutamate 259.

Belongs to the ferrochelatase family.

The protein localises to the cytoplasm. It catalyses the reaction heme b + 2 H(+) = protoporphyrin IX + Fe(2+). It functions in the pathway porphyrin-containing compound metabolism; protoheme biosynthesis; protoheme from protoporphyrin-IX: step 1/1. Its function is as follows. Catalyzes the ferrous insertion into protoporphyrin IX. The polypeptide is Ferrochelatase (Chlamydia trachomatis serovar D (strain ATCC VR-885 / DSM 19411 / UW-3/Cx)).